Reading from the N-terminus, the 1317-residue chain is Kinesin-like protein KIF16B (1317 aa).

A Kinesin motor domain is found at 3–358; it reads SVKVAVRVRP…LRYANRAKNI (356 aa). 102-109 lines the ATP pocket; it reads GQTGSGKS. Residues 370 to 425 are a coiled coil; it reads VKLIRELRAEIARLKTLLAQGNQIALLDSPTALSMEEKLQQNEARVQELTKEWTNK. Position 398 is a phosphoserine (S398). The 52-residue stretch at 478–529 folds into the FHA domain; the sequence is TYVGRDDASTEQDIVLHGLDLESEHCIFENIGGTVTLIPLSGSQCSVNGVQI. The residue at position 577 (T577) is a Phosphothreonine. Position 582 is a phosphoserine (S582). 2 coiled-coil regions span residues 595–882 and 936–1087; these read GLEF…DESV and LSLD…VQKD. Residues 1036–1048 show a composition bias toward polar residues; the sequence is LASLNSGSREQSG. A disordered region spans residues 1036 to 1057; it reads LASLNSGSREQSGLQASLEAEQ. S1052 carries the post-translational modification Phosphoserine. Positions 1182-1296 constitute a PX domain; sequence DPIKISIPRY…KVGLTLSKHT (115 aa).

It belongs to the TRAFAC class myosin-kinesin ATPase superfamily. Kinesin family. Interacts with RAB14. Interacts with PTPN21. As to expression, primarily expressed in brain. Also present in kidney, liver, intestine, placenta, leukocytes, heart and skeletal muscle (at protein level).

Its subcellular location is the cytoplasm. It is found in the cytoskeleton. The protein localises to the early endosome membrane. The protein resides in the spindle. Functionally, plus end-directed microtubule-dependent motor protein involved in endosome transport and receptor recycling and degradation. Regulates the plus end motility of early endosomes and the balance between recycling and degradation of receptors such as EGF receptor (EGFR) and FGF receptor (FGFR). Regulates the Golgi to endosome transport of FGFR-containing vesicles during early development, a key process for developing basement membrane and epiblast and primitive endoderm lineages during early postimplantation development. This Homo sapiens (Human) protein is Kinesin-like protein KIF16B (KIF16B).